A 189-amino-acid polypeptide reads, in one-letter code: Segregation and condensation protein B (189 aa).

The protein belongs to the ScpB family. Homodimer. Homodimerization may be required to stabilize the binding of ScpA to the Smc head domains. Component of a cohesin-like complex composed of ScpA, ScpB and the Smc homodimer, in which ScpA and ScpB bind to the head domain of Smc. The presence of the three proteins is required for the association of the complex with DNA.

Its subcellular location is the cytoplasm. Functionally, participates in chromosomal partition during cell division. May act via the formation of a condensin-like complex containing Smc and ScpA that pull DNA away from mid-cell into both cell halves. This is Segregation and condensation protein B from Lachnoclostridium phytofermentans (strain ATCC 700394 / DSM 18823 / ISDg) (Clostridium phytofermentans).